A 46-amino-acid polypeptide reads, in one-letter code: Photosystem II reaction center protein K (46 aa).

A propeptide spanning residues 1 to 9 (MTTLALVLA) is cleaved from the precursor. A helical transmembrane segment spans residues 18-38 (FAPIVDVLPVIPVFFILLAFV).

Belongs to the PsbK family. In terms of assembly, PSII is composed of 1 copy each of membrane proteins PsbA, PsbB, PsbC, PsbD, PsbE, PsbF, PsbH, PsbI, PsbJ, PsbK, PsbL, PsbM, PsbT, PsbX, PsbY, PsbZ, Psb30/Ycf12, at least 3 peripheral proteins of the oxygen-evolving complex and a large number of cofactors. It forms dimeric complexes. This protein is tightly associated with CP43 (psbC), one of the core proteins.

The protein resides in the plastid. Its subcellular location is the chloroplast thylakoid membrane. One of the components of the core complex of photosystem II (PSII). PSII is a light-driven water:plastoquinone oxidoreductase that uses light energy to abstract electrons from H(2)O, generating O(2) and a proton gradient subsequently used for ATP formation. It consists of a core antenna complex that captures photons, and an electron transfer chain that converts photonic excitation into a charge separation. Required for assembly and/or stability of PSII. The sequence is that of Photosystem II reaction center protein K from Chlamydomonas reinhardtii (Chlamydomonas smithii).